The chain runs to 696 residues: Transcriptional regulatory protein pro1 (696 aa).

The tract at residues 1–48 is disordered; it reads MSTQSPNHHEDITKTSSVNMTTTTTTTKTKAAAKAGTNAAPKQKTQMH. The span at 21 to 40 shows a compositional bias: low complexity; the sequence is TTTTTTTKTKAAAKAGTNAA. The zn(2)-C6 fungal-type DNA-binding region spans 55–82; sequence CYTCRLRRKKCDEGSPMCTACKHLGLCC. Residues 112–145 form a disordered region; that stretch reads LSEKSSHTIQTSINTPPGLSHSLPTSATFSDPLD. Residues 118 to 140 show a composition bias toward polar residues; the sequence is HTIQTSINTPPGLSHSLPTSATF.

The protein resides in the nucleus. In terms of biological role, may be involved in fruiting body development. This Neurospora crassa (strain ATCC 24698 / 74-OR23-1A / CBS 708.71 / DSM 1257 / FGSC 987) protein is Transcriptional regulatory protein pro1 (adv-1).